The following is a 59-amino-acid chain: MGQQHQFRPGQKAPNNGVYVEIGETGSMVKNPQKVHLSAGEMFPETSNHNRLWTYKRKP.

This is an uncharacterized protein from Bacillus subtilis (strain 168).